We begin with the raw amino-acid sequence, 918 residues long: Isoleucine--tRNA ligase (918 aa).

The 'HIGH' region motif lies at 57–67 (PYANGHIHIGT). E552 lines the L-isoleucyl-5'-AMP pocket. The 'KMSKS' region signature appears at 593 to 597 (KMSKS). Residue K596 participates in ATP binding. Residues C886, C889, C906, and C909 each contribute to the Zn(2+) site.

Belongs to the class-I aminoacyl-tRNA synthetase family. IleS type 1 subfamily. As to quaternary structure, monomer. Zn(2+) serves as cofactor.

Its subcellular location is the cytoplasm. It carries out the reaction tRNA(Ile) + L-isoleucine + ATP = L-isoleucyl-tRNA(Ile) + AMP + diphosphate. Catalyzes the attachment of isoleucine to tRNA(Ile). As IleRS can inadvertently accommodate and process structurally similar amino acids such as valine, to avoid such errors it has two additional distinct tRNA(Ile)-dependent editing activities. One activity is designated as 'pretransfer' editing and involves the hydrolysis of activated Val-AMP. The other activity is designated 'posttransfer' editing and involves deacylation of mischarged Val-tRNA(Ile). This Thermotoga neapolitana (strain ATCC 49049 / DSM 4359 / NBRC 107923 / NS-E) protein is Isoleucine--tRNA ligase.